Reading from the N-terminus, the 417-residue chain is MDKLKIIGNGPLNGEIRVSGAKNAALPILCAGLLTADTMRFTNVPMLRDIATTQKLLQGMGVRVMTDNVHEMEITASHLDSLVAPYELVKTMRASILVLGPTLARFGEATVSLPGGCAIGSRPVDQHIKGLVAMGAEVSIEHGYVKARAKRLRGARIVMDMVTVGGTENLLMAATLAEGTTILENAAREPEVTDLANCLVAMGAKISGIGTDRLVIEGVDKLHGAEYAVMPDRIEAGTFLVAGAMTRGHVVLKNAAPKSMEAVLDKLRETGALIECGDDWISLDMKQRPKAVNFRTLPYPAFPTDMQAQLMTLNCVADGAGVVTETIFENRFMHVPELNRMGANIEVEGNTAIVKGVDKLSGATVMATDLRASASLVIAGLVAEGETIVDRIYHLDRGYEYIEKKLGAVGALIERVS.

22-23 (KN) contributes to the phosphoenolpyruvate binding site. Residue Arg-93 participates in UDP-N-acetyl-alpha-D-glucosamine binding. Cys-117 (proton donor) is an active-site residue. Cys-117 bears the 2-(S-cysteinyl)pyruvic acid O-phosphothioketal mark. Residues 122–126 (RPVDQ), Asp-305, and Ile-327 each bind UDP-N-acetyl-alpha-D-glucosamine.

The protein belongs to the EPSP synthase family. MurA subfamily.

It is found in the cytoplasm. The enzyme catalyses phosphoenolpyruvate + UDP-N-acetyl-alpha-D-glucosamine = UDP-N-acetyl-3-O-(1-carboxyvinyl)-alpha-D-glucosamine + phosphate. It functions in the pathway cell wall biogenesis; peptidoglycan biosynthesis. Functionally, cell wall formation. Adds enolpyruvyl to UDP-N-acetylglucosamine. This chain is UDP-N-acetylglucosamine 1-carboxyvinyltransferase, found in Chromobacterium violaceum (strain ATCC 12472 / DSM 30191 / JCM 1249 / CCUG 213 / NBRC 12614 / NCIMB 9131 / NCTC 9757 / MK).